Reading from the N-terminus, the 513-residue chain is Aspartic proteinase A2 (513 aa).

Positions 1–24 are cleaved as a signal peptide; it reads MGVYSRAVAFSVFVSFLLFFTAYS. A propeptide spans 25–71 (activation peptide); it reads KRNDGTFRVGLKKLKLDPNNRLATRFGSKQEEALRSSLRSYNNNLGG. Residues 89–510 form the Peptidase A1 domain; the sequence is YYGEIAIGTP…DFGNEQVGFA (422 aa). D107 is a catalytic residue. 2 disulfide bridges follow: C120–C126 and C285–C289. Residue D294 is part of the active site. Positions 319–424 constitute a Saposin B-type domain; sequence VVSQQCKTVV…NEICERMPSP (106 aa). 4 disulfides stabilise this stretch: C324-C418, C349-C390, C355-C387, and C432-C469. An N-linked (GlcNAc...) asparagine glycan is attached at N404.

It belongs to the peptidase A1 family. As to expression, expressed in seed pods and dry seeds.

It is found in the vacuole. Involved in the breakdown of propeptides of storage proteins in protein-storage vacuoles. The protein is Aspartic proteinase A2 (APA2) of Arabidopsis thaliana (Mouse-ear cress).